The primary structure comprises 488 residues: Bile acid receptor (488 aa).

K133 is covalently cross-linked (Glycyl lysine isopeptide (Lys-Gly) (interchain with G-Cter in SUMO1)). Residues 135–210 (DELCVVCGDR…MGMLAECMYT (76 aa)) constitute a DNA-binding region (nuclear receptor). Residues 138 to 158 (CVVCGDRASGYHYNALTCEGC) form an NR C4-type zinc finger. 2 positions are modified to phosphoserine; by PKC/PRKCA: S146 and S165. At K168 the chain carries N6-acetyllysine; by EP300. An NR C4-type zinc finger spans residues 174–198 (CKNGGNCVMDMYMRRKCQECRLRKC). Residue K221 is modified to N6-methyllysine; by SETD7. The residue at position 228 (K228) is an N6-acetyllysine; by EP300. The NR LBD domain maps to 264-488 (DQQTLLDYIM…PLLCEIWDVQ (225 aa)). K291 is covalently cross-linked (Glycyl lysine isopeptide (Lys-Gly) (interchain with G-Cter in SUMO1)). Chenodeoxycholate-binding residues include R347, Y377, and Y385. A Phosphothreonine; by PKC/PRKCZ modification is found at T458. H463 lines the chenodeoxycholate pocket.

This sequence belongs to the nuclear hormone receptor family. NR1 subfamily. Heterodimer with RXRA; the heterodimerization enhances the binding affinity for LXXLL motifs from coactivators. Binds DNA predominantly as a heterodimer with RXRA. After activation by agonist binding interacts with coactivators. Interacts with PPARGC1A, SMARCA4 and EP300. Interacts with NCOA1, NCOA2, CARM1, SETD7, PRMT1, GPS2, SMARCA4 and MED1. Interacts with XRCC5 and XRCC6; decreasing NR1H4/FXR transactivation activity towards ABCB11/BSEP. Interacts with PAGR1 and NCOA6; indicative for an association with an MLL2/MLL3 complex (ASCOM). Interacts with NR5A2. Acetylated by EP300. Lys-228 as is the major acetylation site for EP300; the dynamicly regulated acetylation inhibits heterodimerization with RXRA and transactivation activity. Deacetylated by SIRT1. Elevated acetylation levels are found in metabolic disease states (mouse models of obesity and type II diabetes). Post-translationally, methylation may increase transactivation of target genes. In terms of processing, phosphorylation by PKC/PRKCA increases transactivation activity by promoting association with PPARGC1A. Sumoylated upon ligand binding. In terms of tissue distribution, expressed in liver and kidney. Expressed in pancreatic beta cells and macrophages. Expressed in the villus epithelium in adult ileum, with highest expression in the intervillus regions. Expression in colon is reduced by inflammation.

The protein resides in the nucleus. Its function is as follows. Ligand-activated transcription factor. Receptor for bile acids (BAs) such as chenodeoxycholic acid (CDCA), lithocholic acid, deoxycholic acid (DCA) and allocholic acid (ACA). Plays a essential role in BA homeostasis through the regulation of genes involved in BA synthesis, conjugation and enterohepatic circulation. Also regulates lipid and glucose homeostasis and is involved in innate immune response. The FXR-RXR heterodimer binds predominantly to farnesoid X receptor response elements (FXREs) containing two inverted repeats of the consensus sequence 5'-AGGTCA-3' in which the monomers are spaced by 1 nucleotide (IR-1) but also to tandem repeat DR1 sites with lower affinity, and can be activated by either FXR or RXR-specific ligands. It is proposed that monomeric nuclear receptors such as NR5A2/LRH-1 bound to coregulatory nuclear responsive element (NRE) halfsites located in close proximity to FXREs modulate transcriptional activity. In the liver activates transcription of the corepressor NR0B2 thereby indirectly inhibiting CYP7A1 and CYP8B1 (involved in BA synthesis) implicating at least in part histone demethylase KDM1A resulting in epigenomic repression, and SLC10A1/NTCP (involved in hepatic uptake of conjugated BAs). Activates transcription of the repressor MAFG (involved in regulation of BA synthesis). Activates transcription of SLC27A5/BACS and BAAT (involved in BA conjugation), ABCB11/BSEP (involved in bile salt export) by directly recruiting histone methyltransferase CARM1, and ABCC2/MRP2 (involved in secretion of conjugated BAs) and ABCB4 (involved in secretion of phosphatidylcholine in the small intestine). In ileal enterocytes activates FABP6/IBABP (involved in cytosolic transport), SLC51A/OSTA and SLC51B/OSTB (involved in secretion of conjugated BAs to the portal blood), and repressor NR0B2/SHP thereby indirectly inhibiting SLC10A2/ASBT (involved in BA uptake). In the intestine activates FGF15 expression and secretion leading to hepatic CYP7A1 repression; the function also involves the coordinated induction of hepatic KLB/beta-klotho expression. Transcriptional activation of FABP6/IBAP and SCD1 but not of ABCB11 is isoform-specific. Regulates transcription of liver UGT2B4 and SULT2A1 involved in BA detoxification; binding to the UGT2B4 promoter seems to imply a monomeric transactivation independent of RXRA. Modulates lipid homeostasis by activating liver NR0B2/SHP-mediated repression of SREBF1 isoform SREBP-1C (involved in de novo lipogenesis), expression of PLTP (involved in HDL formation), SCARB1 (involved in HDL hepatic uptake), APOE, APOC1, APOC4, VLDLR and SDC1 (involved in the hepatic uptake of LDL and IDL remnants), and inhibiting expression of MTTP (involved in VLDL assembly). Increases expression of APOC2 (promoting lipoprotein lipase activity implicated in triglyceride clearance). Transrepresses APOA1 probably involving a monomeric competition with NR2A1 for binding to a DR1 element. Also reduces triglyceride clearance by inhibiting expression of ANGPTL3 and APOC3 (both involved in inhibition of lipoprotein lipase). Involved in glucose homeostasis by modulating hepatic gluconeogenesis through activation of NR0B2/SHP-mediated repression of respective genes. Modulates glycogen synthesis (inducing phosphorylation of glycogen synthase kinase-3). Modulates glucose-stimulated insulin secretion and is involved in insulin resistance. Involved in intestinal innate immunity. Plays a role in protecting the distal small intestine against bacterial overgrowth and preservation of the epithelial barrier. Down-regulates inflammatory cytokine expression in several types of immune cells including macrophages and mononuclear cells. Mediates transrepression of TLR4-induced cytokine expression; the function seems to require its sumoylation and prevents N-CoR nuclear receptor corepressor clearance from target genes such as IL1B and NOS2. Involved in the TLR9-mediated protective mechanism in intestinal inflammation. Plays a anti-inflammatory role in liver inflammation; proposed to inhibit pro-inflammatory (but not antiapoptotic) NF-kappa-B signaling. Functionally, activates transcription of IBAP and SDC1. The protein is Bile acid receptor (Nr1h4) of Mus musculus (Mouse).